The primary structure comprises 339 residues: MKKENPLAIVILAAGKGTRMKSELAKVLHPVFGRPMIQHVLASTAGLPSDKRIIIIGHQRHAVREALADDACTFVVQEEQLGTAHAVLTAKEAIADDCEDVMILCGDTPLISGQSLEEMYDRHRTNSATVTLMTTQLGDPTNYGRIISDNAGNLLRIVEEKDADPAEKRIKEINAGIYCVRRDFLYRALQKVENNNSQGELYLTDIIDLAVKSEQKVQRYLAPEPKDVLGVNSRIELAMADEELRMRRNREVMLTGVSMILPATIMISSQSEIGFDSLVGAGVELRGHCQIGSNCKIDTGAILTNCKMESGSHVGAYSVLTGCTVAADEKIPAQQREEE.

The interval 1-234 is pyrophosphorylase; that stretch reads MKKENPLAIV…PKDVLGVNSR (234 aa). UDP-N-acetyl-alpha-D-glucosamine contacts are provided by residues 12–15, Lys26, Gln77, and 82–83; these read LAAG and GT. Residue Asp107 participates in Mg(2+) binding. Gly144, Glu159, Asn174, and Asn232 together coordinate UDP-N-acetyl-alpha-D-glucosamine. Asn232 is a Mg(2+) binding site. The segment at 235–255 is linker; it reads IELAMADEELRMRRNREVMLT. The N-acetyltransferase stretch occupies residues 256 to 339; the sequence is GVSMILPATI…KIPAQQREEE (84 aa).

It belongs to the N-acetylglucosamine-1-phosphate uridyltransferase family. In terms of assembly, homotrimer. The cofactor is Mg(2+).

Its subcellular location is the cytoplasm. It catalyses the reaction alpha-D-glucosamine 1-phosphate + acetyl-CoA = N-acetyl-alpha-D-glucosamine 1-phosphate + CoA + H(+). The enzyme catalyses N-acetyl-alpha-D-glucosamine 1-phosphate + UTP + H(+) = UDP-N-acetyl-alpha-D-glucosamine + diphosphate. The protein operates within nucleotide-sugar biosynthesis; UDP-N-acetyl-alpha-D-glucosamine biosynthesis; N-acetyl-alpha-D-glucosamine 1-phosphate from alpha-D-glucosamine 6-phosphate (route II): step 2/2. Its pathway is nucleotide-sugar biosynthesis; UDP-N-acetyl-alpha-D-glucosamine biosynthesis; UDP-N-acetyl-alpha-D-glucosamine from N-acetyl-alpha-D-glucosamine 1-phosphate: step 1/1. It participates in bacterial outer membrane biogenesis; LPS lipid A biosynthesis. In terms of biological role, catalyzes the last two sequential reactions in the de novo biosynthetic pathway for UDP-N-acetylglucosamine (UDP-GlcNAc). The C-terminal domain catalyzes the transfer of acetyl group from acetyl coenzyme A to glucosamine-1-phosphate (GlcN-1-P) to produce N-acetylglucosamine-1-phosphate (GlcNAc-1-P), which is converted into UDP-GlcNAc by the transfer of uridine 5-monophosphate (from uridine 5-triphosphate), a reaction catalyzed by the N-terminal domain. The polypeptide is Bifunctional protein GlmU (glmU) (Desulfotalea psychrophila (strain LSv54 / DSM 12343)).